A 303-amino-acid chain; its full sequence is MDLDQWISKVKDGQHLSEDELQLLCEYVKEILIEESNVQPVNSPVTVCGDIHGQFHDLMKLFQTGGHVPDTNYIFMGDFVDRGYNSLEVFTILLLLKARYPANITLLRGNHESRQLTQVYGFYDECQRKYGNANAWRYCTDVFDYLTLSAIIDGTVLCVHGGLSPDVRTIDQIRLIERNCEIPHEGPFCDLMWSDPEDIETWAVSPRGAGWLFGSRVTTEFNHINKLDLVCRAHQLVQEGLKYMFQDKGLVTVWSAPNYCYRCGNVASILSFNDNMEREVKFFTETEENNQMRGPRTGVPYFL.

Asp-50, His-52, Asp-78, and Asn-110 together coordinate Zn(2+). The active-site Proton donor is His-111. Zn(2+) contacts are provided by His-160 and His-234.

This sequence belongs to the PPP phosphatase family. PP-6 (PP-V) subfamily. As to quaternary structure, interacts with PHYA and PHYB, mostly when they are phosphorylated and in Pfr forms. Interacts with TAP46. Interacts with NRP. Interacts with PIN1 and PIN2. Interacts with ABI5. Interacts with PIF3 and PIF4. Protein phosphatase 6 (PP6) holoenzyme is a heterotrimeric complex formed by the catalytic subunit FYPP, a SAPS domain-containing subunit (SAL) and a protein phosphatase 2A regulatory subunit A (PP2AA). Zn(2+) is required as a cofactor. Mostly expressed in flowers. Also detected to a lower extent in stems and leaves. Expressed in roots.

It localises to the cytoplasm. It carries out the reaction O-phospho-L-seryl-[protein] + H2O = L-seryl-[protein] + phosphate. The catalysed reaction is O-phospho-L-threonyl-[protein] + H2O = L-threonyl-[protein] + phosphate. Functionally, catalytic subunit of protein phosphatase 6 (PP6). Dephosphorylates phosphorylated phytochromes, with a preference toward Pfr forms. Plays a major role in the photoperiodic control of flowering time in long days by modulating phytochrome signals in flowering time control. Involved in the regulation of polar auxin transport in roots. Dephosphorylates directly the auxin efflux carriers PIN1 and PIN2, thus promoting their proper polar localization in root cell plasma membrane. Acts antagonistically with the protein kinase PID to regulate the reversible phosphorylation of PIN and polar targeting, subsequently impacting polar auxin transport and plant development. Involved in the regulation of abscisic acid (ABA) signaling during seed germination and postgermination seedling growth. Functions as a negative regulator of ABA signaling through direct dephosphorylation and destabilization of ABI5 protein. Acts antagonistically with the protein kinase SRK2E/SNRK2.6 to regulate ABI5 phosphorylation and ABA responses. Involved in the regulation of phosphorylation status in hypocotyl phototropism. Involved in the negative regulation of photomorphogenesis by controlling the stability and transcriptional activity of PIF3 and PIF4 proteins in the dark, via the regulation of their phosphorylation status. This chain is Phytochrome-associated serine/threonine-protein phosphatase 3, found in Arabidopsis thaliana (Mouse-ear cress).